We begin with the raw amino-acid sequence, 219 residues long: Probable GTP-binding protein EngB (219 aa).

An EngB-type G domain is found at 26 to 200 (EGVEIAFAGR…RAKLDTWFAP (175 aa)). Residues 34 to 41 (GRSNAGKS), 61 to 65 (GRTQL), 79 to 82 (DLPG), 146 to 149 (TKAD), and 179 to 181 (FSS) each bind GTP. Mg(2+) is bound by residues Ser-41 and Thr-63.

This sequence belongs to the TRAFAC class TrmE-Era-EngA-EngB-Septin-like GTPase superfamily. EngB GTPase family. Mg(2+) is required as a cofactor.

In terms of biological role, necessary for normal cell division and for the maintenance of normal septation. This is Probable GTP-binding protein EngB from Vibrio parahaemolyticus serotype O3:K6 (strain RIMD 2210633).